A 606-amino-acid chain; its full sequence is Ectonucleoside triphosphate diphosphohydrolase 7 (606 aa).

Residues 1–28 are Cytoplasmic-facing; it reads MARISFSYLCPASWYFTVPTVSPFLRQR. A helical transmembrane segment spans residues 29-49; it reads VAFLGLFFIPCVLLLLLIMDL. Residues 50-548 are Vesicular-facing; sequence RHWATSLPRD…PAHGSWLRLS (499 aa). The active-site Proton acceptor is Glu-217. N-linked (GlcNAc...) asparagine glycosylation occurs at Asn-330. The cysteines at positions 448 and 477 are disulfide-linked. The helical transmembrane segment at 549–569 threads the bilayer; it reads FVYNHYLFFACTLVVLLAIVL. The Cytoplasmic portion of the chain corresponds to 570–606; it reads YLLRIHRIHRRQTRASAPLDLLWIEQVVPMIGVQVGP.

The protein belongs to the GDA1/CD39 NTPase family. The cofactor is Ca(2+). Mg(2+) is required as a cofactor. In terms of tissue distribution, widely expressed. Expressed at high level in brain, kidney, liver, testis and small intestin. Weakly expressed in lung, thymus and heart.

The protein resides in the cytoplasmic vesicle membrane. It carries out the reaction a ribonucleoside 5'-triphosphate + H2O = a ribonucleoside 5'-diphosphate + phosphate + H(+). It catalyses the reaction UTP + H2O = UDP + phosphate + H(+). The catalysed reaction is GTP + H2O = GDP + phosphate + H(+). The enzyme catalyses CTP + H2O = CDP + phosphate + H(+). It carries out the reaction ATP + H2O = ADP + phosphate + H(+). In terms of biological role, catalyzes the hydrolysis of nucleoside triphosphates and diphosphates in a calcium- or magnesium-dependent manner. Preferentially hydrolyzes nucleoside 5'-triphosphates, with substrate preference for UTP &gt; GTP &gt; CTP. Hydrolyzes nucleoside diphosphates only to a minor extent. In contrast to its human ortholog is able to hydrolyze ATP. In the epithelial cells of small intestine controls luminal ATP levels, therefore regulating Th17-cell development. The sequence is that of Ectonucleoside triphosphate diphosphohydrolase 7 (Entpd7) from Mus musculus (Mouse).